Here is a 1218-residue protein sequence, read N- to C-terminus: Protein dispatched (1218 aa).

A helical transmembrane segment spans residues 21–41 (YLVVVSIAVYCVACIIVALVL). A disordered region spans residues 99-135 (VETKLHPNHRRRKNKHKNRNKNKRRKEQNQSSHEHHD). Residues 104 to 124 (HPNHRRRKNKHKNRNKNKRRK) are compositionally biased toward basic residues. N-linked (GlcNAc...) asparagine glycosylation is found at N127, N176, N197, N264, N319, and N388. In terms of domain architecture, SSD spans 430-624 (AMDLGLENEL…ITWLPASVSI (195 aa)). 6 consecutive transmembrane segments (helical) span residues 443–463 (LLLTDVWLVSLGGTFVMASVW), 473–493 (LMSCVAICFSLGLAYFFYAIV), 504–524 (LLAVVVIIGIGADDVFLFLKI), 570–590 (AAASMFVTSLTTAGAFYASYS), 598–618 (CFGIFAGTVVVTNYLLMITWL), and 670–690 (AYLWLLIFGALGASSAVIVFW). Residues N767, N883, and N891 are each glycosylated (N-linked (GlcNAc...) asparagine). 5 consecutive transmembrane segments (helical) span residues 975-995 (LAVLLCFTVNILISIYAVLTV), 996-1016 (SLSIFNTVAVLILLGWQLNIL), 1019-1039 (IAVSTAIGLAVDFSLHYGIHY), 1058-1078 (IIGPTVMAATTTGLAGGIMMA), and 1087-1107 (IGVFLVVVMIVSWFYATFFLM).

This sequence belongs to the dispatched family.

The protein resides in the membrane. Its function is as follows. Segment polarity protein which functions in hedgehog (Hh) signaling. Regulates the trafficking and the release of cholesterol-modified hedgehog protein from cells of the posterior compartment (P cells) and is hence required for the effective production of the Hh signal. The chain is Protein dispatched (disp) from Drosophila melanogaster (Fruit fly).